The following is a 435-amino-acid chain: Methylenetetrahydrofolate--tRNA-(uracil-5-)-methyltransferase TrmFO (435 aa).

Residue Gly-9–Gly-14 coordinates FAD.

The protein belongs to the MnmG family. TrmFO subfamily. Requires FAD as cofactor.

It is found in the cytoplasm. It catalyses the reaction uridine(54) in tRNA + (6R)-5,10-methylene-5,6,7,8-tetrahydrofolate + NADH + H(+) = 5-methyluridine(54) in tRNA + (6S)-5,6,7,8-tetrahydrofolate + NAD(+). The catalysed reaction is uridine(54) in tRNA + (6R)-5,10-methylene-5,6,7,8-tetrahydrofolate + NADPH + H(+) = 5-methyluridine(54) in tRNA + (6S)-5,6,7,8-tetrahydrofolate + NADP(+). Functionally, catalyzes the folate-dependent formation of 5-methyl-uridine at position 54 (M-5-U54) in all tRNAs. The polypeptide is Methylenetetrahydrofolate--tRNA-(uracil-5-)-methyltransferase TrmFO (Staphylococcus aureus (strain JH1)).